The chain runs to 346 residues: Elongation factor Ts (346 aa).

Residues 80-83 (TDFV) form an involved in Mg(2+) ion dislocation from EF-Tu region.

The protein belongs to the EF-Ts family.

The protein resides in the cytoplasm. In terms of biological role, associates with the EF-Tu.GDP complex and induces the exchange of GDP to GTP. It remains bound to the aminoacyl-tRNA.EF-Tu.GTP complex up to the GTP hydrolysis stage on the ribosome. The chain is Elongation factor Ts from Streptococcus suis (strain 98HAH33).